The primary structure comprises 287 residues: Steroidogenic acute regulatory protein, mitochondrial (287 aa).

Residues 1 to 61 (MLPATFKLCA…RRSSLLSSRI (61 aa)) constitute a mitochondrion transit peptide. The region spanning 66–279 (GYNEAEVSYV…LRQRMADNSV (214 aa)) is the START domain.

May interact with TSPO.

Its subcellular location is the mitochondrion. The catalysed reaction is cholesterol(in) = cholesterol(out). It participates in steroid metabolism; cholesterol metabolism. Functionally, plays a key role in steroid hormone synthesis by enhancing the metabolism of cholesterol into pregnenolone. Mediates the transfer of cholesterol from the outer mitochondrial membrane to the inner mitochondrial membrane where it is cleaved to pregnenolone. This Salvelinus fontinalis (Brook trout) protein is Steroidogenic acute regulatory protein, mitochondrial (star).